The sequence spans 107 residues: MPTVTYVHPDGTKHEVEVPTGKRVMQAAIGAGIDGIVAECGGQAMCATCHVYVESPWADKFPSISEEEDEMLDDTVSPRTEASRLSCQLVVSDDVDGLIVRLPEEQV.

The region spanning 2 to 106 is the 2Fe-2S ferredoxin-type domain; it reads PTVTYVHPDG…GLIVRLPEEQ (105 aa). [2Fe-2S] cluster contacts are provided by C40, C46, C49, and C87.

It belongs to the adrenodoxin/putidaredoxin family. It depends on [2Fe-2S] cluster as a cofactor.

Ferredoxin-type protein which transfers electrons from rhodocoxin reductase to cytochrome CYP116 (ThcB), which is involved in the degradation of thiocarbamate herbicides. The chain is Rhodocoxin (thcC) from Rhodococcus erythropolis (Arthrobacter picolinophilus).